A 243-amino-acid polypeptide reads, in one-letter code: Probable transcriptional regulatory protein BRE_29 (243 aa).

This sequence belongs to the TACO1 family.

The protein resides in the cytoplasm. The chain is Probable transcriptional regulatory protein BRE_29 from Borrelia recurrentis (strain A1).